The primary structure comprises 330 residues: uncharacterized protein (330 aa).

Residues 4–242 (LSIQNLVVEY…AGEVLFEQST (239 aa)) form the ABC transporter domain. 40–47 (GPSGCGKT) lines the ATP pocket. An a nucleoside 3',5'-cyclic phosphate-binding site is contributed by 210-330 (DRVVELTPDF…LIEHRALAND (121 aa)).

The protein belongs to the ABC transporter superfamily. As to quaternary structure, the complex is composed of two ATP-binding proteins (MT0079), two transmembrane proteins (MT0078) and a solute-binding protein.

Probably part of an ABC transporter complex. Probably responsible for energy coupling to the transport system. This is an uncharacterized protein from Mycobacterium tuberculosis (strain CDC 1551 / Oshkosh).